Reading from the N-terminus, the 1253-residue chain is Pleckstrin homology-like domain family B member 2 (1253 aa).

Positions 1 to 12 (MEEHSYIQKELD) are enriched in basic and acidic residues. 3 disordered regions span residues 1–43 (MEEH…PKKY), 60–159 (LTLS…KSHD), and 187–212 (DAGP…RKMS). Over residues 29-43 (NDSQNMMESLSPKKY) the composition is skewed to polar residues. Phosphoserine is present on residues S71 and S73. The segment covering 74-96 (PLGTSVRSSPSLAKIQGSKQFSY) has biased composition (polar residues). Residues 126-144 (ADFDHYTGRDSERALRLSE) show a composition bias toward basic and acidic residues. Residues S157, S204, S212, S242, and S245 each carry the phosphoserine modification. The interval 265–286 (NQLTPLSLPPRNSLGNSKRTKL) is disordered. S330, S334, S348, S351, S384, S387, S415, S420, S468, S489, and S501 each carry phosphoserine. T504 bears the Phosphothreonine mark. Phosphoserine is present on S513. The interval 525–567 (LSQSSASFFTPRSTRNDELLSDLTRTPPPPSSTFPKASSESSY) is disordered. 2 positions are modified to phosphothreonine: T550 and T574. Coiled-coil stretches lie at residues 584 to 696 (SQEL…LDNC) and 722 to 807 (FEDL…LCNL). T898 bears the Phosphothreonine mark. The stretch at 1032 to 1098 (IARIEEMERL…QKLIEKEVKI (67 aa)) forms a coiled coil. One can recognise a PH domain in the interval 1143–1246 (EKTCRGFLIK…WMDVIVTGAE (104 aa)).

Interacts with FLNC. Interacts with AMOTL2; interaction may facilitate PHLDB2 localization to the myotube podosome cortex that surrounds the core. Part of a cortical microtubule stabilization complex (CMSC) composed of KANK1, PPFIA1, PPFIBP1, ERC1/ELKS, PHLDB2/LL5beta, CLASPs, KIF21A and possibly additional interactors; within CMSCs KANK1 and PHLDB2/LL5beta appear to be the core components for targeting of microtubule-binding proteins KIF21A and CLASPs, whereas PPFIA1, PPFIBP1 and ERC1/ELKS serve as scaffolds for protein clustering.

The protein localises to the cytoplasm. Its subcellular location is the cell cortex. It is found in the membrane. It localises to the cell projection. The protein resides in the podosome. Seems to be involved in the assembly of the postsynaptic apparatus. May play a role in acetyl-choline receptor (AChR) aggregation in the postsynaptic membrane. This is Pleckstrin homology-like domain family B member 2 (PHLDB2) from Homo sapiens (Human).